Consider the following 431-residue polypeptide: Gamma-glutamyl phosphate reductase (431 aa).

Belongs to the gamma-glutamyl phosphate reductase family.

Its subcellular location is the cytoplasm. It catalyses the reaction L-glutamate 5-semialdehyde + phosphate + NADP(+) = L-glutamyl 5-phosphate + NADPH + H(+). It functions in the pathway amino-acid biosynthesis; L-proline biosynthesis; L-glutamate 5-semialdehyde from L-glutamate: step 2/2. Catalyzes the NADPH-dependent reduction of L-glutamate 5-phosphate into L-glutamate 5-semialdehyde and phosphate. The product spontaneously undergoes cyclization to form 1-pyrroline-5-carboxylate. This Synechococcus elongatus (strain ATCC 33912 / PCC 7942 / FACHB-805) (Anacystis nidulans R2) protein is Gamma-glutamyl phosphate reductase.